Consider the following 218-residue polypeptide: Ras-related protein Rab-27B (218 aa).

N-acetylthreonine is present on T2. GTP is bound at residue 16-24; it reads GDSGVGKTT. The short motif at 38 to 46 is the Effector region element; sequence FITTVGIDF. GTP-binding positions include 74 to 78, 133 to 136, and 163 to 165; these read DTAGQ, NKAD, and SAA. A disulfide bridge links C123 with C188. S-geranylgeranyl cysteine attachment occurs at residues C216 and C218. At C218 the chain carries Cysteine methyl ester.

This sequence belongs to the small GTPase superfamily. Rab family. In terms of assembly, interacts with SYTL2, SYTL4, MYRIP and MLPH. Interacts with RPH3A and RPH3A. Interacts (GDP-bound form preferentially) with DENND10.

The protein resides in the membrane. Its subcellular location is the late endosome. It carries out the reaction GTP + H2O = GDP + phosphate + H(+). With respect to regulation, regulated by guanine nucleotide exchange factors (GEFs) which promote the exchange of bound GDP for free GTP, GTPase activating proteins (GAPs) which increase the GTP hydrolysis activity, and GDP dissociation inhibitors which inhibit the dissociation of the nucleotide from the GTPase. Activated by GEFs such as DENND10. Small GTPase which cycles between active GTP-bound and inactive GDP-bound states. In its active state, binds to a variety of effector proteins to regulate homeostasis of late endocytic pathway, including endosomal positioning, maturation and secretion. Plays a role in NTRK2/TRKB axonal anterograde transport by facilitating the association of NTRK2/TRKB with KLC1. May be involved in targeting uroplakins to urothelial apical membranes. The chain is Ras-related protein Rab-27B (Rab27b) from Rattus norvegicus (Rat).